We begin with the raw amino-acid sequence, 467 residues long: Ribulose bisphosphate carboxylase large chain (467 aa).

The propeptide occupies 1–2 (MS). An N-acetylproline modification is found at proline 3. Lysine 14 is modified (N6,N6,N6-trimethyllysine). Residues asparagine 123 and threonine 173 each coordinate substrate. Lysine 175 acts as the Proton acceptor in catalysis. Position 177 (lysine 177) interacts with substrate. 3 residues coordinate Mg(2+): lysine 201, aspartate 203, and glutamate 204. Lysine 201 carries the post-translational modification N6-carboxylysine. The active-site Proton acceptor is the histidine 294. Substrate is bound by residues arginine 295, histidine 327, and serine 379.

Belongs to the RuBisCO large chain family. Type I subfamily. Heterohexadecamer of 8 large chains and 8 small chains; disulfide-linked. The disulfide link is formed within the large subunit homodimers. Requires Mg(2+) as cofactor. In terms of processing, the disulfide bond which can form in the large chain dimeric partners within the hexadecamer appears to be associated with oxidative stress and protein turnover.

The protein localises to the plastid. The protein resides in the chloroplast. The enzyme catalyses 2 (2R)-3-phosphoglycerate + 2 H(+) = D-ribulose 1,5-bisphosphate + CO2 + H2O. It catalyses the reaction D-ribulose 1,5-bisphosphate + O2 = 2-phosphoglycolate + (2R)-3-phosphoglycerate + 2 H(+). RuBisCO catalyzes two reactions: the carboxylation of D-ribulose 1,5-bisphosphate, the primary event in carbon dioxide fixation, as well as the oxidative fragmentation of the pentose substrate in the photorespiration process. Both reactions occur simultaneously and in competition at the same active site. This is Ribulose bisphosphate carboxylase large chain from Serenoa repens (Saw palmetto).